The primary structure comprises 404 residues: Peroxisomal biogenesis factor 9 (404 aa).

A run of 3 helical transmembrane segments spans residues 73–93, 94–114, and 149–169; these read FLFL…SLVF, LLGV…LLMG, and FGLD…FQVV. Residues 180–214 are disordered; that stretch reads DGQRSQQSQNSGMNVASSSRGRHQLVPDRPGSQLS. The span at 181-198 shows a compositional bias: polar residues; that stretch reads GQRSQQSQNSGMNVASSS. The helical transmembrane segment at 349-369 threads the bilayer; it reads FFVGLVSWIVDETAACVVFCL.

The protein resides in the peroxisome membrane. Functionally, essential for the import of peroxisomal matrix proteins. The sequence is that of Peroxisomal biogenesis factor 9 (PEX9) from Yarrowia lipolytica (strain CLIB 122 / E 150) (Yeast).